The following is a 281-amino-acid chain: Aldo-keto reductase MAP_3007 (281 aa).

The active-site Proton donor is the Y56. Residues L196, I234, R236, S237, A238, S245, and R272 each coordinate NADPH.

It belongs to the aldo/keto reductase family.

The polypeptide is Aldo-keto reductase MAP_3007 (Mycolicibacterium paratuberculosis (strain ATCC BAA-968 / K-10) (Mycobacterium paratuberculosis)).